The primary structure comprises 367 residues: Large ribosomal subunit protein mL38 (367 aa).

The N-terminal 29 residues, 1 to 29, are a transit peptide targeting the mitochondrion; that stretch reads MLRRSIHTTKILQKPNATSHIWSDFTTRP.

The protein belongs to the phosphatidylethanolamine-binding protein family. Mitochondrion-specific ribosomal protein mL38 subfamily. Component of the mitochondrial large ribosomal subunit (mt-LSU). Mature yeast 74S mitochondrial ribosomes consist of a small (37S) and a large (54S) subunit. The 37S small subunit contains a 15S ribosomal RNA (15S mt-rRNA) and 34 different proteins. The 54S large subunit contains a 21S rRNA (21S mt-rRNA) and 46 different proteins.

It localises to the mitochondrion. Functionally, component of the mitochondrial ribosome (mitoribosome), a dedicated translation machinery responsible for the synthesis of mitochondrial genome-encoded proteins, including at least some of the essential transmembrane subunits of the mitochondrial respiratory chain. The mitoribosomes are attached to the mitochondrial inner membrane and translation products are cotranslationally integrated into the membrane. The chain is Large ribosomal subunit protein mL38 (MRPL35) from Saccharomyces cerevisiae (strain ATCC 204508 / S288c) (Baker's yeast).